A 474-amino-acid polypeptide reads, in one-letter code: Stabilizer of axonemal microtubules 1 (474 aa).

Mn stretches follow at residues 30 to 64, 65 to 97, 98 to 131, 132 to 165, 166 to 199, 200 to 232, 233 to 266, 267 to 299, 300 to 332, 333 to 366, 367 to 400, and 401 to 434; these read KPCL…KGPI, PMEG…PSEE, NMDL…PCSD, KMEC…PASV, RFDN…LCNI, PLED…PCEI, PFES…GLDM, PFCN…PPED, RMDL…KKCG, RFEG…LPTE, PLDC…RGNV, and PVES…TFEE. The disordered stretch occupies residues 446–474; that stretch reads VSQAGSQQSSHLSVDDSENPNQRELEVLA. Residues 448-457 are compositionally biased toward polar residues; it reads QAGSQQSSHL.

Belongs to the FAM154 family. As to quaternary structure, associates with microtubules via the Mn regions. In terms of tissue distribution, widely expressed, with highest levels in testis. Expressed in mature spermatozoa (at protein level).

It is found in the cytoplasm. The protein localises to the cytoskeleton. The protein resides in the microtubule organizing center. Its subcellular location is the centrosome. It localises to the centriole. It is found in the cilium basal body. The protein localises to the cilium axoneme. The protein resides in the flagellum axoneme. Functionally, may play a role in the regulation of cilium length. Stabilizes microtubules at low temperature. This Homo sapiens (Human) protein is Stabilizer of axonemal microtubules 1 (SAXO1).